The primary structure comprises 394 residues: NAD(P)H-quinone oxidoreductase subunit H (394 aa).

It belongs to the complex I 49 kDa subunit family. As to quaternary structure, NDH-1 can be composed of about 15 different subunits; different subcomplexes with different compositions have been identified which probably have different functions.

The protein localises to the cellular thylakoid membrane. It carries out the reaction a plastoquinone + NADH + (n+1) H(+)(in) = a plastoquinol + NAD(+) + n H(+)(out). It catalyses the reaction a plastoquinone + NADPH + (n+1) H(+)(in) = a plastoquinol + NADP(+) + n H(+)(out). Functionally, NDH-1 shuttles electrons from an unknown electron donor, via FMN and iron-sulfur (Fe-S) centers, to quinones in the respiratory and/or the photosynthetic chain. The immediate electron acceptor for the enzyme in this species is believed to be plastoquinone. Couples the redox reaction to proton translocation, and thus conserves the redox energy in a proton gradient. Cyanobacterial NDH-1 also plays a role in inorganic carbon-concentration. The protein is NAD(P)H-quinone oxidoreductase subunit H of Prochlorococcus marinus (strain MIT 9303).